The following is a 276-amino-acid chain: MMKPVLHFSKLYEVKKLLRKSRLYTVCEESRCPNISECFGNKTATFMILGNRCTRRCAFCNVEKGFPKGVDPEEPYRLLEAVKTLGLKYVVITSVTRDDLPDGGASHFAKCIRVLKENIEDIKVEVLIPDFRGNKKALEVVLKEKPVVLNHNVETVPRLYPSVRIGANYKRSLNILKWSKEIDKSVYTKSALILGFGERKEEVIKVMEDLRSVDCDFLVLGQYYQPSLKHHPVVKYYSEEEFKEFEEIGYEMGFKFVVSKPNARSSYKAFESLLST.

7 residues coordinate [4Fe-4S] cluster: C27, C32, C38, C53, C57, C60, and S266. Residues 39–255 (FGNKTATFMI…EEIGYEMGFK (217 aa)) enclose the Radical SAM core domain.

It belongs to the radical SAM superfamily. Lipoyl synthase family. Requires [4Fe-4S] cluster as cofactor.

The protein resides in the cytoplasm. It catalyses the reaction [[Fe-S] cluster scaffold protein carrying a second [4Fe-4S](2+) cluster] + N(6)-octanoyl-L-lysyl-[protein] + 2 oxidized [2Fe-2S]-[ferredoxin] + 2 S-adenosyl-L-methionine + 4 H(+) = [[Fe-S] cluster scaffold protein] + N(6)-[(R)-dihydrolipoyl]-L-lysyl-[protein] + 4 Fe(3+) + 2 hydrogen sulfide + 2 5'-deoxyadenosine + 2 L-methionine + 2 reduced [2Fe-2S]-[ferredoxin]. It functions in the pathway protein modification; protein lipoylation via endogenous pathway; protein N(6)-(lipoyl)lysine from octanoyl-[acyl-carrier-protein]: step 2/2. Its function is as follows. Catalyzes the radical-mediated insertion of two sulfur atoms into the C-6 and C-8 positions of the octanoyl moiety bound to the lipoyl domains of lipoate-dependent enzymes, thereby converting the octanoylated domains into lipoylated derivatives. The protein is Lipoyl synthase of Aquifex aeolicus (strain VF5).